A 259-amino-acid polypeptide reads, in one-letter code: Proteasome subunit beta type-4 (259 aa).

The protein belongs to the peptidase T1B family. In terms of assembly, the 26S proteasome consists of a 20S proteasome core and two 19S regulatory subunits. The 20S proteasome core is composed of 28 subunits that are arranged in four stacked rings, resulting in a barrel-shaped structure. The two end rings are each formed by seven alpha subunits, and the two central rings are each formed by seven beta subunits. The catalytic chamber with the active sites is on the inside of the barrel.

It is found in the cytoplasm. It localises to the nucleus. Functionally, non-catalytic component of the proteasome, a multicatalytic proteinase complex which is characterized by its ability to cleave peptides with Arg, Phe, Tyr, Leu, and Glu adjacent to the leaving group at neutral or slightly basic pH. The proteasome has an ATP-dependent proteolytic activity. This is Proteasome subunit beta type-4 (psmB4-1) from Dictyostelium discoideum (Social amoeba).